Here is a 430-residue protein sequence, read N- to C-terminus: MGQSVVVLGAQWGDEGKGKIVDLLTEEIGAVVRFQGGHNAGHTLVINGKKTVLHLIPSGILRNGVLCLIGNGVVISPAALRKEIEELEDTGLEIRSRLKISPAAPLIMEYHIALDQAREKAAGGRAIGTTGRGIGPAYEDKVGRRGIRVADLHYPDQLAEKLRDALDYHNFVLTRYFGVDGMDFQRIYDEMLVFAEYVEPMKSDVAGILHDLRKQGKRVLFEGAQGTLLDIDHGTYPYVTSSSTTVGGALSGAGVGVQDIDYVLGIAKAYATRVGGGPFPTELDDEIGQGIRDRGVEYGASTGRPRRCGWMDIVALKRAVAINGITGLCITKLDVLDGMDKLKICIAYEYHDKRSEYAPLDAQGWEECTPVYLEFPGWNESTHGITSWEKLPPAARAYLCALEELAGCPIGIVSTGPDREHTIMLHDPFA.

GTP-binding positions include 13-19 and 41-43; these read GDEGKGK and GHT. The active-site Proton acceptor is the aspartate 14. Mg(2+) is bound by residues aspartate 14 and glycine 41. Residues 14–17, 39–42, threonine 130, arginine 144, glutamine 225, threonine 240, and arginine 304 each bind IMP; these read DEGK and NAGH. Histidine 42 serves as the catalytic Proton donor. Residue 300–306 coordinates substrate; that stretch reads ASTGRPR. GTP is bound by residues arginine 306, 332 to 334, and 414 to 416; these read KLD and STG.

Belongs to the adenylosuccinate synthetase family. Homodimer. Mg(2+) serves as cofactor.

The protein localises to the cytoplasm. The enzyme catalyses IMP + L-aspartate + GTP = N(6)-(1,2-dicarboxyethyl)-AMP + GDP + phosphate + 2 H(+). It functions in the pathway purine metabolism; AMP biosynthesis via de novo pathway; AMP from IMP: step 1/2. Plays an important role in the de novo pathway of purine nucleotide biosynthesis. Catalyzes the first committed step in the biosynthesis of AMP from IMP. The polypeptide is Adenylosuccinate synthetase (Xylella fastidiosa (strain 9a5c)).